The sequence spans 219 residues: Hemolysin-3 (219 aa).

7 consecutive transmembrane segments (helical) span residues 19 to 39, 49 to 69, 83 to 103, 112 to 132, 138 to 158, 165 to 185, and 194 to 214; these read AITH…LIIH, VVAF…STLL, ILDH…FLLI, TLLA…IFFV, ASTL…KPLY, GFSL…FFLW, and IWHL…LFYV.

It belongs to the UPF0073 (Hly-III) family.

The protein localises to the cell membrane. Its function is as follows. Might be virulent against a mammalian host; when expressed in E.coli, the soluble extract has hemolytic activity on human erythrocytes. The activity is not inhibited by cholesterol or activated by 2-mercaptoethanol. Might be pore-forming protein. Its in vivo role in virulence is untested, nor has it been shown to be secreted by B.cereus. This chain is Hemolysin-3, found in Bacillus cereus.